A 780-amino-acid chain; its full sequence is Cullin-5 (780 aa).

The residue at position 34 (Ser34) is a Phosphoserine. Residue Thr210 is modified to Phosphothreonine. In terms of domain architecture, Cullin neddylation spans Arg711–Asp772. Lys724 participates in a covalent cross-link: Glycyl lysine isopeptide (Lys-Gly) (interchain with G-Cter in NEDD8).

Belongs to the cullin family. As to quaternary structure, component of multiple cullin-5-RING E3 ubiquitin-protein ligase complexes (ECS complexes, also named CRL5 complexes) formed of CUL5, Elongin BC (ELOB and ELOC), RNF7/RBX2 and a variable SOCS box domain-containing protein as substrate-specific recognition component. CUL5-containing ECS complexes specifically contain RNF7/RBX2, and not RBX1, as catalytic subunit. Component of the ECS(ASB2) complex with the substrate recognition component ASB2. Component of the ECS(ASB6) complex with the substrate recognition component ASB6. Component of the ECS(ASB7) complex with the substrate recognition component ASB7. Component of the ECS(ASB9) complex with the substrate recognition component ASB9. Component of the ECS(ASB11) complex with the substrate recognition component ASB11. Component of the ECS(ASB12) complex with the substrate recognition component ASB12. Component of the ECS(LRRC41) complex with the substrate recognition component LRRC41. Component of the ECS(SOCS1) complex with the substrate recognition component SOCS1. Component of the ECS(SOCS2) complex with the substrate recognition component SOCS2. Component of the ECS(WSB1) complex with the substrate recognition subunit WSB1. Component of the ECS(SOCS3) complex with the substrate recognition component SOCS3. Component of the ECS(SOCS7) complex with the substrate recognition component SOCS7. Component of the ECS(SPSB1) complex with the substrate recognition component SPSB1. Component of the ECS(SPSB3) complex with the substrate recognition component SPSB3. Component of the ECS(SPSB2) complex with the substrate recognition component SPSB2. Component of the ECS(SPSB4) complex with the substrate recognition component SPSB4. Component of the ECS(RAB40) complex with the substrate recognition subunit RAB40A, RAB40B or RAB40C. Component of the ECS(KLHDC1) complex with the substrate recognition component KLHDC1. Component of the ECS(PCMTD1) complex with the substrate recognition subunit PCMTD1. May also form complexes containing RBX1 and ELOA or VHL; additional evidence is however required to confirm this result in vivo. Interacts (when neddylated) with ARIH2; leading to activate the E3 ligase activity of ARIH2. Interacts with ERCC6; the interaction is induced by DNA damaging agents or inhibitors of RNA polymerase II elongation. Interacts with ELOA (via the BC-box). Interacts (unneddylated form) with DCUN1D1, DCUN1D2, DCUN1D3, DCUN1D4 and DCUN1D5; these interactions promote the cullin neddylation. (Microbial infection) Interacts (via the substrate recognition component) with HIV-1 Vif; forming an active cullin-5-RING E3 ubiquitin-protein ligase complex (ECS complex). In terms of assembly, (Microbial infection) Interacts (via the substrate recognition component) with human adenovirus 5 proteins E1B-55K and E4-orf6. As to quaternary structure, (Microbial infection) Interacts with herpes virus 8 protein LANA1; this interaction promotes the degradation of NF-kappa-B component RELA. (Microbial infection) Interacts with molluscum contagiosum virus protein MC132; this interaction promotes the degradation of NF-kappa-B component RELA. Post-translationally, neddylated; which enhances the ubiquitination activity of ECS complexes and prevents binding of the inhibitor CAND1. Deneddylated via its interaction with the COP9 signalosome (CSN).

The protein resides in the nucleus. It participates in protein modification; protein ubiquitination. In terms of biological role, core component of multiple cullin-5-RING E3 ubiquitin-protein ligase complexes (ECS complexes, also named CRL5 complexes), which mediate the ubiquitination and subsequent proteasomal degradation of target proteins. Acts a scaffold protein that contributes to catalysis through positioning of the substrate and the ubiquitin-conjugating enzyme. The functional specificity of the E3 ubiquitin-protein ligase complex depends on the variable SOCS box-containing substrate recognition component. Acts as a key regulator of neuron positioning during cortex development: component of various SOCS-containing ECS complexes, such as the ECS(SOCS7) complex, that regulate reelin signaling by mediating ubiquitination and degradation of DAB1. ECS(SOCS1) seems to direct ubiquitination of JAK2. The ECS(SOCS2) complex mediates the ubiquitination and subsequent proteasomal degradation of phosphorylated EPOR and GHR. The ECS(SPSB3) complex catalyzes ubiquitination of nuclear CGAS. ECS(KLHDC1) complex is part of the DesCEND (destruction via C-end degrons) pathway and mediates ubiquitination and degradation of truncated SELENOS selenoprotein produced by failed UGA/Sec decoding, which ends with a glycine. The ECS(ASB9) complex mediates ubiquitination and degradation of CKB. As part of some ECS complex, promotes 'Lys-11'-linked ubiquitination and degradation of BTRC. As part of a multisubunit ECS complex, polyubiquitinates monoubiquitinated POLR2A. As part of the ECS(RAB40C) complex, mediates ANKRD28 ubiquitination and degradation, thereby inhibiting protein phosphatase 6 (PP6) complex activity and focal adhesion assembly during cell migration. As part of the ECS(RAB40A) complex, mediates RHOU 'Lys-48'-linked ubiquitination and degradation, thus inhibiting focal adhesion disassembly during cell migration. As part of the ECS(RAB40B) complex, mediates LIMA1/EPLIN and RAP2 ubiquitination, thereby regulating actin cytoskeleton dynamics and stress fiber formation during cell migration. May form a cell surface vasopressin receptor. Functionally, (Microbial infection) Following infection by HIV-1 virus, CUL5 associates with HIV-1 Vif proteins and forms a cullin-5-RING E3 ubiquitin-protein ligase complex (ECS complex) that catalyzes ubiquitination and degradation of APOBEC3F and APOBEC3G. The complex can also ubiquitinate APOBEC3H to some extent. Its function is as follows. (Microbial infection) Seems to be involved in proteasomal degradation of p53/TP53 stimulated by adenovirus E1B-55 kDa protein. In Homo sapiens (Human), this protein is Cullin-5.